The sequence spans 456 residues: Dolichyl-diphosphooligosaccharide--protein glycosyltransferase 48 kDa subunit (456 aa).

Positions 1 to 42 (MGYFRCARAGSFGRRRKMEPSTAARAWALFWLLLPLLGAVCA) are cleaved as a signal peptide. Residues 43 to 427 (SGPRTLVLLD…YERFIPSAYP (385 aa)) are Lumenal-facing. Residues 428–447 (YYASAFSMMLGLFIFSIVFL) traverse the membrane as a helical segment. Residues 448–456 (HMKEKEKSD) lie on the Cytoplasmic side of the membrane.

Belongs to the DDOST 48 kDa subunit family. In terms of assembly, component of the oligosaccharyltransferase (OST) complex. OST exists in two different complex forms which contain common core subunits RPN1, RPN2, OST48, OST4, DAD1 and TMEM258, either STT3A or STT3B as catalytic subunits, and form-specific accessory subunits. STT3A complex assembly occurs through the formation of 3 subcomplexes. Subcomplex 1 contains RPN1 and TMEM258, subcomplex 2 contains the STT3A-specific subunits STT3A, DC2/OSTC, and KCP2 as well as the core subunit OST4, and subcomplex 3 contains RPN2, DAD1, and OST48. The STT3A complex can form stable complexes with the Sec61 complex or with both the Sec61 and TRAP complexes. Interacts with SMIM22.

The protein resides in the endoplasmic reticulum membrane. It participates in protein modification; protein glycosylation. In terms of biological role, subunit of the oligosaccharyl transferase (OST) complex that catalyzes the initial transfer of a defined glycan (Glc(3)Man(9)GlcNAc(2) in eukaryotes) from the lipid carrier dolichol-pyrophosphate to an asparagine residue within an Asn-X-Ser/Thr consensus motif in nascent polypeptide chains, the first step in protein N-glycosylation. N-glycosylation occurs cotranslationally and the complex associates with the Sec61 complex at the channel-forming translocon complex that mediates protein translocation across the endoplasmic reticulum (ER). All subunits are required for a maximal enzyme activity. Required for the assembly of both SST3A- and SS3B-containing OST complexes. In Homo sapiens (Human), this protein is Dolichyl-diphosphooligosaccharide--protein glycosyltransferase 48 kDa subunit.